A 668-amino-acid polypeptide reads, in one-letter code: DNA ligase (668 aa).

Residues 37–41 (DAVYD), 86–87 (SM), and Glu-116 contribute to the NAD(+) site. Lys-118 functions as the N6-AMP-lysine intermediate in the catalytic mechanism. NAD(+)-binding residues include Arg-139, Glu-173, Lys-288, and Lys-312. Cys-406, Cys-409, Cys-424, and Cys-429 together coordinate Zn(2+). A BRCT domain is found at 590–668 (APDNFFKEKT…EQEAIAKIEK (79 aa)).

It belongs to the NAD-dependent DNA ligase family. LigA subfamily. The cofactor is Mg(2+). Requires Mn(2+) as cofactor.

It carries out the reaction NAD(+) + (deoxyribonucleotide)n-3'-hydroxyl + 5'-phospho-(deoxyribonucleotide)m = (deoxyribonucleotide)n+m + AMP + beta-nicotinamide D-nucleotide.. Its function is as follows. DNA ligase that catalyzes the formation of phosphodiester linkages between 5'-phosphoryl and 3'-hydroxyl groups in double-stranded DNA using NAD as a coenzyme and as the energy source for the reaction. It is essential for DNA replication and repair of damaged DNA. This is DNA ligase from Lactobacillus johnsonii (strain CNCM I-12250 / La1 / NCC 533).